A 268-amino-acid polypeptide reads, in one-letter code: 4-hydroxy-tetrahydrodipicolinate reductase (268 aa).

Residues 9-14, glutamate 35, 99-101, and 123-126 each bind NAD(+); these read GVCGRM, GTT, and APNY. Residue histidine 156 is the Proton donor/acceptor of the active site. A (S)-2,3,4,5-tetrahydrodipicolinate-binding site is contributed by histidine 157. Lysine 160 (proton donor) is an active-site residue. (S)-2,3,4,5-tetrahydrodipicolinate is bound at residue 166–167; the sequence is GT.

It belongs to the DapB family.

The protein localises to the cytoplasm. The catalysed reaction is (S)-2,3,4,5-tetrahydrodipicolinate + NAD(+) + H2O = (2S,4S)-4-hydroxy-2,3,4,5-tetrahydrodipicolinate + NADH + H(+). It catalyses the reaction (S)-2,3,4,5-tetrahydrodipicolinate + NADP(+) + H2O = (2S,4S)-4-hydroxy-2,3,4,5-tetrahydrodipicolinate + NADPH + H(+). It participates in amino-acid biosynthesis; L-lysine biosynthesis via DAP pathway; (S)-tetrahydrodipicolinate from L-aspartate: step 4/4. Functionally, catalyzes the conversion of 4-hydroxy-tetrahydrodipicolinate (HTPA) to tetrahydrodipicolinate. The chain is 4-hydroxy-tetrahydrodipicolinate reductase from Magnetococcus marinus (strain ATCC BAA-1437 / JCM 17883 / MC-1).